Reading from the N-terminus, the 318-residue chain is NADH-quinone oxidoreductase subunit H 2 (318 aa).

9 consecutive transmembrane segments (helical) span residues 4–24 (LLIA…AGVF), 77–97 (LAPA…AFAP), 106–126 (VGVL…VLGA), 146–166 (LAYE…AGSF), 179–199 (LWFI…GLAA), 214–234 (LVAG…FLGE), 238–258 (ILLV…GPIL), 262–282 (IWFG…RAAL), and 293–313 (FAWK…AWIA).

Belongs to the complex I subunit 1 family. As to quaternary structure, NDH-1 is composed of 14 different subunits. Subunits NuoA, H, J, K, L, M, N constitute the membrane sector of the complex.

The protein resides in the cell inner membrane. It carries out the reaction a quinone + NADH + 5 H(+)(in) = a quinol + NAD(+) + 4 H(+)(out). In terms of biological role, NDH-1 shuttles electrons from NADH, via FMN and iron-sulfur (Fe-S) centers, to quinones in the respiratory chain. The immediate electron acceptor for the enzyme in this species is believed to be ubiquinone. Couples the redox reaction to proton translocation (for every two electrons transferred, four hydrogen ions are translocated across the cytoplasmic membrane), and thus conserves the redox energy in a proton gradient. This subunit may bind ubiquinone. The chain is NADH-quinone oxidoreductase subunit H 2 from Cereibacter sphaeroides (strain ATCC 17023 / DSM 158 / JCM 6121 / CCUG 31486 / LMG 2827 / NBRC 12203 / NCIMB 8253 / ATH 2.4.1.) (Rhodobacter sphaeroides).